The primary structure comprises 422 residues: Dipeptidase aclJ (422 aa).

Residues 28–45 (LAYSVTLTLVALFFTFAL) traverse the membrane as a helical segment. Zn(2+) contacts are provided by histidine 77 and aspartate 79. A glycan (N-linked (GlcNAc...) asparagine) is linked at asparagine 96. Cysteine 128 and cysteine 219 are oxidised to a cystine. Position 190 (glutamate 190) interacts with Zn(2+). Histidine 217 is a substrate binding site. N-linked (GlcNAc...) asparagine glycosylation occurs at asparagine 270. Cysteine 287 and cysteine 319 form a disulfide bridge. Substrate is bound by residues arginine 291 and aspartate 351.

It belongs to the metallo-dependent hydrolases superfamily. Peptidase M19 family. Zn(2+) is required as a cofactor.

It localises to the membrane. The enzyme catalyses an L-aminoacyl-L-amino acid + H2O = 2 an L-alpha-amino acid. The protein operates within mycotoxin biosynthesis. Its function is as follows. Dipeptidase; part of the gene cluster that mediates the biosynthesis of aspirochlorine (or antibiotic A30641), an unusual halogenated spiro compound with distinctive antifungal properties due to selective inhibition of protein biosynthesis, and which is also active against bacteria, viruses, and murine tumor cells. The non-ribosomal peptide synthetase (NRPS) aclP is responsible the formation of the diketopiperazine (DKP) core from the condensation of 2 phenylalanine residues. One Phe residue is tailored into chlorotyrosine by hydroxylation and chlorination, whereas the second Phe undergoes an unprecedented C-C bond cleavage to be converted into glycine. After formation of the DKP, sulfur is incorporated into the DKP by conjugation with glutathione by aclG, followed by its stepwise degradation to the thiol by aclI, aclJ and aclK, and the dithiol oxidation by aclT. In addition, oxygenases (aclB, aclC, aclL and aclO) and O-methyltransferases (aclM and aclU) act as tailoring enzymes to produce the intermediate dechloroaspirochlorine. Ultimately, chlorination of dechloroaspirochlorine by the halogenase aclH is the last step in the aspirochlorine pathway. This chain is Dipeptidase aclJ, found in Aspergillus oryzae (strain ATCC 42149 / RIB 40) (Yellow koji mold).